A 68-amino-acid polypeptide reads, in one-letter code: MIFPIRCFSCGAVISEVYEEYRNRLKDGENPEEILNDLEVKKYCCRRMFASHRLDNDRELFDDIVEYK.

Zn(2+)-binding residues include Cys7, Cys10, Cys44, and Cys45.

It belongs to the archaeal Rpo10/eukaryotic RPB10 RNA polymerase subunit family. As to quaternary structure, part of the RNA polymerase complex. It depends on Zn(2+) as a cofactor.

The protein localises to the cytoplasm. It carries out the reaction RNA(n) + a ribonucleoside 5'-triphosphate = RNA(n+1) + diphosphate. In terms of biological role, DNA-dependent RNA polymerase (RNAP) catalyzes the transcription of DNA into RNA using the four ribonucleoside triphosphates as substrates. The chain is DNA-directed RNA polymerase subunit Rpo10 from Methanococcus maripaludis (strain C6 / ATCC BAA-1332).